A 482-amino-acid chain; its full sequence is Matrix metalloproteinase-20 (482 aa).

Positions 1 to 21 (MKVLPASGLAVLVTALKFATA) are cleaved as a signal peptide. Positions 22-106 (DPNLLAATPR…PRCGVPDVAN (85 aa)) are excised as a propeptide. The short motif at 97-104 (PRCGVPDV) is the Cysteine switch element. Position 99 (Cys-99) interacts with Zn(2+). Positions 163, 164, and 165 each coordinate Ca(2+). 2 residues coordinate Zn(2+): His-175 and Asp-177. Ca(2+) is bound by residues Asp-182, Gly-183, Arg-185, and Thr-187. His-190 lines the Zn(2+) pocket. Ca(2+)-binding residues include Glu-196, Gly-197, Gly-199, and Asp-201. His-203 is a Zn(2+) binding site. Asp-205 and Glu-208 together coordinate Ca(2+). His-225 lines the Zn(2+) pocket. Residue Glu-226 is part of the active site. Zn(2+)-binding residues include His-229 and His-235. Hemopexin repeat units follow at residues 292–342 (PDLC…FPQL), 343–388 (MSNV…GFPR), 390–438 (VQRI…FSGV), and 439–482 (SGHI…WIGC). The cysteines at positions 295 and 482 are disulfide-linked.

It belongs to the peptidase M10A family. Zn(2+) serves as cofactor. It depends on Ca(2+) as a cofactor. Post-translationally, autoactivates at least at the 106-Asn-|-Tyr-107 site. In terms of tissue distribution, expressed in the enamel organ.

The protein localises to the secreted. It localises to the extracellular space. It is found in the extracellular matrix. Functionally, degrades amelogenin, the major protein component of the enamel matrix and two of the macromolecules characterizing the cartilage extracellular matrix: aggrecan and the cartilage oligomeric matrix protein (COMP). May play a central role in tooth enamel formation. Cleaves aggrecan at the '360-Asn-|-Phe-361' site. The chain is Matrix metalloproteinase-20 (Mmp20) from Mus musculus (Mouse).